Consider the following 300-residue polypeptide: Quinolinate synthase (300 aa).

Residues histidine 23 and serine 40 each contribute to the iminosuccinate site. Residue cysteine 85 participates in [4Fe-4S] cluster binding. Iminosuccinate-binding positions include 111-113 (YIN) and serine 128. Cysteine 171 provides a ligand contact to [4Fe-4S] cluster. Residues 198-200 (HPE) and threonine 215 each bind iminosuccinate. Cysteine 258 lines the [4Fe-4S] cluster pocket.

Belongs to the quinolinate synthase family. Type 2 subfamily. The cofactor is [4Fe-4S] cluster.

Its subcellular location is the cytoplasm. The enzyme catalyses iminosuccinate + dihydroxyacetone phosphate = quinolinate + phosphate + 2 H2O + H(+). Its pathway is cofactor biosynthesis; NAD(+) biosynthesis; quinolinate from iminoaspartate: step 1/1. Functionally, catalyzes the condensation of iminoaspartate with dihydroxyacetone phosphate to form quinolinate. This chain is Quinolinate synthase, found in Clostridium novyi (strain NT).